The chain runs to 424 residues: Phosphomethylpyrimidine synthase (424 aa).

Residues Met94, Tyr123, His162, Ser184 to Gly186, Asn225 to Arg228, and Glu264 contribute to the substrate site. His268 contributes to the Zn(2+) binding site. A substrate-binding site is contributed by Tyr291. His332 provides a ligand contact to Zn(2+). The [4Fe-4S] cluster site is built by Cys406, Cys409, and Cys413.

This sequence belongs to the ThiC family. [4Fe-4S] cluster serves as cofactor.

The enzyme catalyses 5-amino-1-(5-phospho-beta-D-ribosyl)imidazole + S-adenosyl-L-methionine = 4-amino-2-methyl-5-(phosphooxymethyl)pyrimidine + CO + 5'-deoxyadenosine + formate + L-methionine + 3 H(+). It participates in cofactor biosynthesis; thiamine diphosphate biosynthesis. In terms of biological role, catalyzes the synthesis of the hydroxymethylpyrimidine phosphate (HMP-P) moiety of thiamine from aminoimidazole ribotide (AIR) in a radical S-adenosyl-L-methionine (SAM)-dependent reaction. The protein is Phosphomethylpyrimidine synthase of Methanosphaerula palustris (strain ATCC BAA-1556 / DSM 19958 / E1-9c).